A 295-amino-acid chain; its full sequence is Small ribosomal subunit protein uS2 (295 aa).

The protein belongs to the universal ribosomal protein uS2 family. Component of the small ribosomal subunit. Mature ribosomes consist of a small (40S) and a large (60S) subunit. The 40S subunit contains about 33 different proteins and 1 molecule of RNA (18S). The 60S subunit contains about 49 different proteins and 3 molecules of RNA (25S, 5.8S and 5S). Interacts with RPS21.

It is found in the cytoplasm. Required for the assembly and/or stability of the 40S ribosomal subunit. Required for the processing of the 20S rRNA-precursor to mature 18S rRNA in a late step of the maturation of 40S ribosomal subunits. The protein is Small ribosomal subunit protein uS2 of Paracoccidioides brasiliensis (strain Pb03).